The chain runs to 340 residues: Uroporphyrinogen decarboxylase (340 aa).

Substrate is bound by residues 21 to 25 (RQAGR), aspartate 71, tyrosine 147, serine 202, and histidine 316.

This sequence belongs to the uroporphyrinogen decarboxylase family. Homodimer.

The protein localises to the cytoplasm. It catalyses the reaction uroporphyrinogen III + 4 H(+) = coproporphyrinogen III + 4 CO2. The protein operates within porphyrin-containing compound metabolism; protoporphyrin-IX biosynthesis; coproporphyrinogen-III from 5-aminolevulinate: step 4/4. In terms of biological role, catalyzes the decarboxylation of four acetate groups of uroporphyrinogen-III to yield coproporphyrinogen-III. This is Uroporphyrinogen decarboxylase from Nitratiruptor sp. (strain SB155-2).